Reading from the N-terminus, the 481-residue chain is Glutamyl-tRNA(Gln) amidotransferase subunit A (481 aa).

Catalysis depends on charge relay system residues Lys-74 and Ser-149. Catalysis depends on Ser-173, which acts as the Acyl-ester intermediate.

The protein belongs to the amidase family. GatA subfamily. Heterotrimer of A, B and C subunits.

The catalysed reaction is L-glutamyl-tRNA(Gln) + L-glutamine + ATP + H2O = L-glutaminyl-tRNA(Gln) + L-glutamate + ADP + phosphate + H(+). Allows the formation of correctly charged Gln-tRNA(Gln) through the transamidation of misacylated Glu-tRNA(Gln) in organisms which lack glutaminyl-tRNA synthetase. The reaction takes place in the presence of glutamine and ATP through an activated gamma-phospho-Glu-tRNA(Gln). The polypeptide is Glutamyl-tRNA(Gln) amidotransferase subunit A (Francisella tularensis subsp. novicida (strain U112)).